A 473-amino-acid chain; its full sequence is ATP synthase subunit beta (473 aa).

Residue Gly-156–Thr-163 coordinates ATP.

This sequence belongs to the ATPase alpha/beta chains family. In terms of assembly, F-type ATPases have 2 components, CF(1) - the catalytic core - and CF(0) - the membrane proton channel. CF(1) has five subunits: alpha(3), beta(3), gamma(1), delta(1), epsilon(1). CF(0) has three main subunits: a(1), b(2) and c(9-12). The alpha and beta chains form an alternating ring which encloses part of the gamma chain. CF(1) is attached to CF(0) by a central stalk formed by the gamma and epsilon chains, while a peripheral stalk is formed by the delta and b chains.

Its subcellular location is the cell inner membrane. It catalyses the reaction ATP + H2O + 4 H(+)(in) = ADP + phosphate + 5 H(+)(out). Its function is as follows. Produces ATP from ADP in the presence of a proton gradient across the membrane. The catalytic sites are hosted primarily by the beta subunits. The protein is ATP synthase subunit beta of Desulfovibrio desulfuricans (strain ATCC 27774 / DSM 6949 / MB).